The sequence spans 204 residues: Ribosome maturation factor RimP (204 aa).

The segment at 176 to 204 (GNFDESQFDEIEESEGEEADEAEQPPTKH) is disordered. The segment covering 181–198 (SQFDEIEESEGEEADEAE) has biased composition (acidic residues).

This sequence belongs to the RimP family.

The protein resides in the cytoplasm. In terms of biological role, required for maturation of 30S ribosomal subunits. The polypeptide is Ribosome maturation factor RimP (Cereibacter sphaeroides (strain ATCC 17029 / ATH 2.4.9) (Rhodobacter sphaeroides)).